The following is a 179-amino-acid chain: Large ribosomal subunit protein uL5 (179 aa).

It belongs to the universal ribosomal protein uL5 family. As to quaternary structure, part of the 50S ribosomal subunit; part of the 5S rRNA/L5/L18/L25 subcomplex. Contacts the 5S rRNA and the P site tRNA. Forms a bridge to the 30S subunit in the 70S ribosome.

Functionally, this is one of the proteins that bind and probably mediate the attachment of the 5S RNA into the large ribosomal subunit, where it forms part of the central protuberance. In the 70S ribosome it contacts protein S13 of the 30S subunit (bridge B1b), connecting the 2 subunits; this bridge is implicated in subunit movement. Contacts the P site tRNA; the 5S rRNA and some of its associated proteins might help stabilize positioning of ribosome-bound tRNAs. The protein is Large ribosomal subunit protein uL5 of Prochlorococcus marinus (strain MIT 9301).